A 358-amino-acid polypeptide reads, in one-letter code: Alanine racemase (358 aa).

Catalysis depends on K35, which acts as the Proton acceptor; specific for D-alanine. Residue K35 is modified to N6-(pyridoxal phosphate)lysine. R130 is a substrate binding site. The active-site Proton acceptor; specific for L-alanine is the Y255. Residue M303 participates in substrate binding.

The protein belongs to the alanine racemase family. Requires pyridoxal 5'-phosphate as cofactor.

It catalyses the reaction L-alanine = D-alanine. Its pathway is amino-acid biosynthesis; D-alanine biosynthesis; D-alanine from L-alanine: step 1/1. In terms of biological role, catalyzes the interconversion of L-alanine and D-alanine. May also act on other amino acids. In Shewanella loihica (strain ATCC BAA-1088 / PV-4), this protein is Alanine racemase (alr).